The chain runs to 497 residues: MAESIEWVEKYRPQSLTDIVGNKKSVVDMREWAQSWLSGTPEKRAIILHGPAGVGKTSAAHALARDLDWETIELNASDQRTAGVIERVAGSASKMSSLTGTTAKRLIILDEADNIHGNADRGGARAIGGIIKNTDQPIVLIANDLYGLTPSVRSLCIELKFNSVQGRSMIPAMKRICVEEKIMCGVGVLEKLAESAGGDLRSAIKDLQAVATGRDEIHIEDIATSERDTKESIFKVLGKIFKSTDPKKALEATYGLDETPENLIHWIDENLPLQYGTEEGTQEDLITGYEYLAKADRYLGRVRKRQSYRLWRYAGALMTCGTVVSKTHVGRGFTKYQPPSFWRKMGQLRAKRDMRDNIASKIADHANKSMRYSRTDLAHLYGRMLEENEYAADVTFDLELSIDEMVYLTGKKKVTKDIQRIHDLAQAKRRSLGRDEGKAFFEKKPKKQTPDKKQMDLTQIINSTPQEDKVEKKETENVPPVKKSASKAKPQKTLFDF.

An ATP-binding site is contributed by 50-57 (GPAGVGKT). Residues 428-455 (KRRSLGRDEGKAFFEKKPKKQTPDKKQM) show a composition bias toward basic and acidic residues. The tract at residues 428 to 497 (KRRSLGRDEG…AKPQKTLFDF (70 aa)) is disordered. Over residues 456–465 (DLTQIINSTP) the composition is skewed to polar residues. Basic and acidic residues predominate over residues 466 to 476 (QEDKVEKKETE).

This sequence belongs to the activator 1 small subunits family. RfcL subfamily. As to quaternary structure, heteromultimer composed of small subunits (RfcS) and large subunits (RfcL).

Functionally, part of the RFC clamp loader complex which loads the PCNA sliding clamp onto DNA. In Methanococcoides burtonii (strain DSM 6242 / NBRC 107633 / OCM 468 / ACE-M), this protein is Replication factor C large subunit.